The following is a 1511-amino-acid chain: ATP-dependent permease PDR12 (1511 aa).

Basic and acidic residues predominate over residues 1 to 21 (MSSTDEHIEKDISSRSNHDDD). The interval 1 to 37 (MSSTDEHIEKDISSRSNHDDDYANSVQSYAASEGQVD) is disordered. Position 2 is an N-acetylserine (serine 2). The Cytoplasmic portion of the chain corresponds to 2–508 (SSTDEHIEKD…RGFQRVKGDS (507 aa)). Residues serine 32, serine 52, and serine 56 each carry the phosphoserine modification. An ABC transporter 1 domain is found at 144-397 (IPAHLISKFT…FQRMGWVKPN (254 aa)). A Glycyl lysine isopeptide (Lys-Gly) (interchain with G-Cter in ubiquitin) cross-link involves residue lysine 426. Residues 509–529 (TYTKVYLSSFLIKALIIGSMF) form a helical membrane-spanning segment. The Extracellular portion of the chain corresponds to 530–548 (HKIDDKSQSTTAGAYSRGG). Residues 549–569 (MLFYVLLFASVTSLAEIGNSF) traverse the membrane as a helical segment. The Cytoplasmic segment spans residues 570–597 (SSRPVIVKHKSYSMYHLSAESLQEIITE). A helical transmembrane segment spans residues 598-618 (FPTKFVAIVILCLITYWIPFM). The Extracellular segment spans residues 619-622 (KYEA). A helical transmembrane segment spans residues 623–643 (GAFFQYILYLLTVQQCTSFIF). Topologically, residues 644 to 657 (KFVATMSKSGVDAH) are cytoplasmic. The helical transmembrane segment at 658–678 (AVGGLWVLMLCVYAGFVLPIG) threads the bilayer. Over 679 to 765 (EMHHWIRWLH…FAYKHAWRNW (87 aa)) the chain is Extracellular. A helical membrane pass occupies residues 766 to 786 (GVNIVWTFGYIVFNVILSEYL). Residues 787-1182 (KPVEGGGDLL…WRSPVYIRAK (396 aa)) lie on the Cytoplasmic side of the membrane. Residues 836 to 1084 (IAEKDVFTWN…TLLKYFERQS (249 aa)) enclose the ABC transporter 2 domain. ATP-binding positions include 878–885 (GESGAGKT) and 972–979 (AEALVGKT). The helical transmembrane segment at 1183–1203 (FFECVACALFVGLSYVGVNHS) threads the bilayer. Residue valine 1204 is a topological domain, extracellular. Residues 1205 to 1225 (GGAIEAFSSIFMLLLIALAMI) traverse the membrane as a helical segment. Over 1226 to 1254 (NQLHVFAYDSRELYEVREAASNTFHWSVL) the chain is Cytoplasmic. Residues 1255-1275 (LLCHAAVENFWSTLCQFMCFI) form a helical membrane-spanning segment. Topologically, residues 1276-1291 (CYYWPAQFSGRASHAG) are extracellular. A helical transmembrane segment spans residues 1292-1312 (FFFFFYVLIFPLYFVTYGLWI). The Cytoplasmic portion of the chain corresponds to 1313–1318 (LYMSPD). A helical transmembrane segment spans residues 1319–1339 (VPSASMINSNLFAAMLLFCGI). At 1340–1444 (LQPREKMPAF…NVKWDHRWRN (105 aa)) the chain is on the extracellular side. N-linked (GlcNAc...) asparagine glycosylation is present at asparagine 1405. Residues 1445–1465 (FGFMWAYICFNIAAMLICYYV) form a helical membrane-spanning segment. Residues 1466–1511 (VRVKVWSLKSVLNFKKWFNGPRKERHEKDTNIFQTVPGDENKITKK) lie on the Cytoplasmic side of the membrane.

It belongs to the ABC transporter superfamily. ABCG family. PDR (TC 3.A.1.205) subfamily.

It is found in the cell membrane. Plasma membrane transporter which mediates resistance to water-soluble, monocarboxylic acids with chain lengths of from C1 to C7 by active extrusion of the preservative anions from the cytosol. Also involved in the export of aromatic and branched-chain organic acids produced in amino acid catabolism. In Saccharomyces cerevisiae (strain ATCC 204508 / S288c) (Baker's yeast), this protein is ATP-dependent permease PDR12 (PDR12).